Here is a 427-residue protein sequence, read N- to C-terminus: Adenylosuccinate synthetase (427 aa).

GTP-binding positions include 12 to 18 and 40 to 42; these read GDEGKGK and GHT. The active-site Proton acceptor is the Asp13. Residues Asp13 and Gly40 each contribute to the Mg(2+) site. Residues 13-16, 38-41, Thr128, Arg142, Gln223, Thr238, and Arg302 each bind IMP; these read DEGK and NAGH. Residue His41 is the Proton donor of the active site. 298–304 contacts substrate; sequence TTTGRPR. Residues Arg304, 330-332, and 412-414 each bind GTP; these read LLD and SVG.

It belongs to the adenylosuccinate synthetase family. Homodimer. Mg(2+) is required as a cofactor.

It is found in the cytoplasm. It catalyses the reaction IMP + L-aspartate + GTP = N(6)-(1,2-dicarboxyethyl)-AMP + GDP + phosphate + 2 H(+). The protein operates within purine metabolism; AMP biosynthesis via de novo pathway; AMP from IMP: step 1/2. In terms of biological role, plays an important role in the de novo pathway of purine nucleotide biosynthesis. Catalyzes the first committed step in the biosynthesis of AMP from IMP. The sequence is that of Adenylosuccinate synthetase from Alkaliphilus metalliredigens (strain QYMF).